A 445-amino-acid chain; its full sequence is MTKVITRFAPSPTGMLHVGNIRVALLNWLYAKKHNGQFILRFDDTDLERSKQEYKNAIEEDLKFLKINWDQTFNQLSRLSRYDVIKKLLLDKKRLYTCYETPEELELKRKVQLSKGLPPIYDRASLNLTTEQIKKYIEQGRKPHYRFLVNHELISWHDMIKGEVKYDGKALSDPIVIRADGSMTYMLCSVIDDIDYDITHIIRGEDHVGNTAIQIQMFEALNKIPPVFGHLSLIINKDEKISKRIGGFEIATLRKQIGLEAMAIASFFSLLGSSSQILPYKNMDELATQFEISNFSKSPTMYQPEDLVRLNHKLLISVDFDEVKERLKEIDATYIDENFWLSVRPNLQKLRDVKDWWDICNQTPNVENLNLDKEYLKQAAELLPQGEITKDSWRIWTKEITNITSRKGKELFLPLRLALTGRESGPEIAGILPLIDRKEIIKRLT.

The 'HIGH' region motif lies at 10 to 20; sequence PSPTGMLHVGN. Positions 240 to 244 match the 'KMSKS' region motif; it reads KISKR. Lys-243 lines the ATP pocket.

Belongs to the class-I aminoacyl-tRNA synthetase family. Glutamate--tRNA ligase type 1 subfamily. Monomer.

Its subcellular location is the cytoplasm. It carries out the reaction tRNA(Glu) + L-glutamate + ATP = L-glutamyl-tRNA(Glu) + AMP + diphosphate. In terms of biological role, catalyzes the attachment of glutamate to tRNA(Glu) in a two-step reaction: glutamate is first activated by ATP to form Glu-AMP and then transferred to the acceptor end of tRNA(Glu). This chain is Glutamate--tRNA ligase 2, found in Rickettsia canadensis (strain McKiel).